Consider the following 892-residue polypeptide: Dipeptidyl peptidase 8 (892 aa).

Residues serine 749, aspartate 827, and histidine 859 each act as charge relay system in the active site.

The protein belongs to the peptidase S9B family. DPPIV subfamily. Homodimer. Forms a ternary complex with NLRP1, composed of a DPP8 homodimer, one full-length NLRP1 protein, and one cleaved C-terminus of NLRP1 (NACHT, LRR and PYD domains-containing protein 1, C-terminus). Forms a ternary complex with CARD8, composed of a DPP8 homodimer, one full-length NLRP1 protein, and one cleaved C-terminus of CARD8 (Caspase recruitment domain-containing protein 8, C-terminus). In the ternary complex, only one subunit of the DPP8 homodimer is bound to NLRP1 or CARD8.

Its subcellular location is the cytoplasm. It catalyses the reaction Release of an N-terminal dipeptide, Xaa-Yaa-|-Zaa-, from a polypeptide, preferentially when Yaa is Pro, provided Zaa is neither Pro nor hydroxyproline.. Inhibited by zinc. Inhibited by the serine proteinase inhibitor 4-(2-aminoethyl)benzenesulphonyl fluoride (AEBSF), and by di-isopropylfluorophosphate. Specifically inhibited by isoindoline derivatives. Inhibited by Val-boroPro (Talabostat, PT-100), a non-selective inhibitor, which triggers pyroptosis in monocytes and macrophages. In terms of biological role, dipeptidyl peptidase that cleaves off N-terminal dipeptides from proteins having a Pro or Ala residue at position 2. Acts as a key inhibitor of caspase-1-dependent monocyte and macrophage pyroptosis in resting cells by preventing activation of NLRP1 and CARD8. Sequesters the cleaved C-terminal part of NLRP1 and CARD8, which respectively constitute the active part of the NLRP1 and CARD8 inflammasomes, in a ternary complex, thereby preventing their oligomerization and activation. The dipeptidyl peptidase activity is required to suppress NLRP1 and CARD8; however, neither NLRP1 nor CARD8 are bona fide substrates of DPP8, suggesting the existence of substrate(s) required for NLRP1 and CARD8 inhibition. This chain is Dipeptidyl peptidase 8, found in Mus musculus (Mouse).